Consider the following 319-residue polypeptide: Putative peptide permease protein BRA0408/BS1330_II0405 (319 aa).

6 consecutive transmembrane segments (helical) span residues 9 to 29 (LLIG…LLQL), 102 to 122 (LLLM…TGII), 138 to 158 (LALL…LYVF), 182 to 202 (LLRH…ALIM), 242 to 262 (LPVV…AIFI), and 284 to 304 (YPVI…VNIL). In terms of domain architecture, ABC transmembrane type-1 spans 98-305 (IGPTLLLMAA…ACVIIVNILT (208 aa)).

This sequence belongs to the binding-protein-dependent transport system permease family. As to quaternary structure, the complex is composed of two ATP-binding proteins (BRA0404 and BRA0405), two transmembrane proteins (BRA0407 and BRA0408) and a solute-binding protein (BRA0409).

The protein localises to the cell inner membrane. Probably part of an ABC transporter complex that could be involved in peptide import. Probably responsible for the translocation of the substrate across the membrane. The chain is Putative peptide permease protein BRA0408/BS1330_II0405 from Brucella suis biovar 1 (strain 1330).